The primary structure comprises 107 residues: MAGVLKNVTDDTFEADVLKSEKPVLVDFWAEWCGPCRQIAPSLEAITEHGGQIEIVKLNIDQNPATAAKYGVMSIPTLNVYQGGEVVKTIVGAKPKAALLRPGPVPR.

One can recognise a Thioredoxin domain in the interval 2–107 (AGVLKNVTDD…ALLRPGPVPR (106 aa)). Cysteine 33 and cysteine 36 are disulfide-bonded.

Belongs to the thioredoxin family.

In terms of biological role, component of the thioredoxin-thioredoxin reductase system. Participates in various redox reactions through the reversible oxidation of its active center dithiol to a disulfide and catalyzes dithiol-disulfide exchange reactions. The protein is Thioredoxin (trxA) of Streptomyces clavuligerus.